We begin with the raw amino-acid sequence, 177 residues long: Disulfide bond formation protein B (177 aa).

The Cytoplasmic portion of the chain corresponds to 1–14 (MMVWNWIDRTPRRV). Residues 15–31 (LALISLACVALLACGLY) traverse the membrane as a helical segment. The Periplasmic portion of the chain corresponds to 32–49 (LQHVVGLVPCPMCIVQRY). A disulfide bridge connects residues C41 and C44. Residues 50–64 (ALIGLALLTGLASAR) traverse the membrane as a helical segment. Residues 65–70 (SAKGWW) are Cytoplasmic-facing. A helical membrane pass occupies residues 71–89 (LTLSALAALTAGFGATVAA). The Periplasmic segment spans residues 90–145 (RQSWLQWYPPQSVSCGRDFYGMIESFPLSRAIPMILRGSGDCAAVDWSLLGGSIAN). A disulfide bridge links C104 with C131. Residues 146–164 (WSFLCFALLGLLLLALLAR) traverse the membrane as a helical segment. The Cytoplasmic segment spans residues 165–177 (GVRGARQRAPAPV).

It belongs to the DsbB family.

The protein localises to the cell inner membrane. Functionally, required for disulfide bond formation in some periplasmic proteins. Acts by oxidizing the DsbA protein. The polypeptide is Disulfide bond formation protein B (Verminephrobacter eiseniae (strain EF01-2)).